A 150-amino-acid chain; its full sequence is Transcriptional regulator MraZ (150 aa).

SpoVT-AbrB domains follow at residues 5–52 and 81–124; these read VTHL…PLPD and AHDL…DAEA.

Belongs to the MraZ family. As to quaternary structure, forms oligomers.

It localises to the cytoplasm. Its subcellular location is the nucleoid. This is Transcriptional regulator MraZ from Alkalilimnicola ehrlichii (strain ATCC BAA-1101 / DSM 17681 / MLHE-1).